Consider the following 535-residue polypeptide: Ankyrin repeat domain-containing protein 34C (535 aa).

ANK repeat units lie at residues 10 to 39, 43 to 80, 84 to 114, and 118 to 147; these read TDGN…YINE, KGET…DPNI, SGKT…DPSL, and TGAS…AKGK. Disordered regions lie at residues 159–181 and 214–237; these read SGTK…DRHS and AGHP…RKVS. A compositionally biased stretch (polar residues) spans 216–225; the sequence is HPSSCNTSKA. Ser-301 carries the phosphoserine modification. The tract at residues 381-444 is disordered; sequence DLDIQPGPDP…RRRPPHLLER (64 aa). Ser-447 carries the phosphoserine modification.

It belongs to the ANKRD34 family.

This is Ankyrin repeat domain-containing protein 34C (ANKRD34C) from Homo sapiens (Human).